Reading from the N-terminus, the 106-residue chain is Large ribosomal subunit protein bL21 (106 aa).

The protein belongs to the bacterial ribosomal protein bL21 family. In terms of assembly, part of the 50S ribosomal subunit. Contacts protein L20.

This protein binds to 23S rRNA in the presence of protein L20. The polypeptide is Large ribosomal subunit protein bL21 (Chlamydia pneumoniae (Chlamydophila pneumoniae)).